The following is a 323-amino-acid chain: GTP 3',8-cyclase (323 aa).

One can recognise a Radical SAM core domain in the interval 4-226 (TFQRQINYLR…LEPFPDLATN (223 aa)). Arg-13 contributes to the GTP binding site. [4Fe-4S] cluster is bound by residues Cys-20 and Cys-24. Tyr-26 provides a ligand contact to S-adenosyl-L-methionine. Cys-27 is a binding site for [4Fe-4S] cluster. Arg-63 lines the GTP pocket. Gly-67 is a binding site for S-adenosyl-L-methionine. Thr-94 is a binding site for GTP. Ser-118 is an S-adenosyl-L-methionine binding site. Residue Lys-155 participates in GTP binding. Met-189 lines the S-adenosyl-L-methionine pocket. Cys-252 and Cys-255 together coordinate [4Fe-4S] cluster. Residue 257-259 (RLR) participates in GTP binding. Cys-269 provides a ligand contact to [4Fe-4S] cluster.

Belongs to the radical SAM superfamily. MoaA family. In terms of assembly, monomer and homodimer. It depends on [4Fe-4S] cluster as a cofactor.

The catalysed reaction is GTP + AH2 + S-adenosyl-L-methionine = (8S)-3',8-cyclo-7,8-dihydroguanosine 5'-triphosphate + 5'-deoxyadenosine + L-methionine + A + H(+). It functions in the pathway cofactor biosynthesis; molybdopterin biosynthesis. Its function is as follows. Catalyzes the cyclization of GTP to (8S)-3',8-cyclo-7,8-dihydroguanosine 5'-triphosphate. The sequence is that of GTP 3',8-cyclase from Moorella thermoacetica (strain ATCC 39073 / JCM 9320).